Consider the following 125-residue polypeptide: MAAKKSSSPNRGFKVADQIQRDLTELIRDLKDPRIGMVTLQGVEVTPDYAHAKVFFSVLIGDGEASEEALNQAAGFLRNGLFKRLHIHTVPTLHFVYDRTTEKAADMNALIARAVASRSKDDDAA.

It belongs to the RbfA family. As to quaternary structure, monomer. Binds 30S ribosomal subunits, but not 50S ribosomal subunits or 70S ribosomes.

Its subcellular location is the cytoplasm. Its function is as follows. One of several proteins that assist in the late maturation steps of the functional core of the 30S ribosomal subunit. Associates with free 30S ribosomal subunits (but not with 30S subunits that are part of 70S ribosomes or polysomes). Required for efficient processing of 16S rRNA. May interact with the 5'-terminal helix region of 16S rRNA. The chain is Ribosome-binding factor A from Acidovorax sp. (strain JS42).